The primary structure comprises 527 residues: Glucose-6-phosphate isomerase (527 aa).

The active-site Proton donor is glutamate 323. Catalysis depends on residues histidine 352 and lysine 454.

The protein belongs to the GPI family.

It localises to the cytoplasm. The enzyme catalyses alpha-D-glucose 6-phosphate = beta-D-fructose 6-phosphate. It participates in carbohydrate biosynthesis; gluconeogenesis. It functions in the pathway carbohydrate degradation; glycolysis; D-glyceraldehyde 3-phosphate and glycerone phosphate from D-glucose: step 2/4. Catalyzes the reversible isomerization of glucose-6-phosphate to fructose-6-phosphate. The protein is Glucose-6-phosphate isomerase of Prochlorococcus marinus (strain MIT 9301).